Here is a 929-residue protein sequence, read N- to C-terminus: LPS-assembly protein LptD (929 aa).

An N-terminal signal peptide occupies residues Met1–Ala24. The segment at Leu26 to Ala208 is disordered. Over residues Gly44–Ser74 the composition is skewed to basic and acidic residues. Residues Arg154 to Ala164 are compositionally biased toward polar residues. Positions Asp181–Ala208 are enriched in basic and acidic residues.

It belongs to the LptD family. In terms of assembly, component of the lipopolysaccharide transport and assembly complex. Interacts with LptE and LptA.

It localises to the cell outer membrane. Together with LptE, is involved in the assembly of lipopolysaccharide (LPS) at the surface of the outer membrane. This chain is LPS-assembly protein LptD, found in Nitrosospira multiformis (strain ATCC 25196 / NCIMB 11849 / C 71).